The following is a 434-amino-acid chain: Enolase 2 (434 aa).

Q171 contacts (2R)-2-phosphoglycerate. E213 (proton donor) is an active-site residue. The Mg(2+) site is built by D250, E293, and D320. Positions 345, 374, 375, and 396 each coordinate (2R)-2-phosphoglycerate. K345 acts as the Proton acceptor in catalysis.

Belongs to the enolase family. Requires Mg(2+) as cofactor.

It localises to the cytoplasm. It is found in the secreted. The protein localises to the cell surface. It catalyses the reaction (2R)-2-phosphoglycerate = phosphoenolpyruvate + H2O. It participates in carbohydrate degradation; glycolysis; pyruvate from D-glyceraldehyde 3-phosphate: step 4/5. Catalyzes the reversible conversion of 2-phosphoglycerate (2-PG) into phosphoenolpyruvate (PEP). It is essential for the degradation of carbohydrates via glycolysis. The protein is Enolase 2 of Streptomyces coelicolor (strain ATCC BAA-471 / A3(2) / M145).